Consider the following 311-residue polypeptide: Aspartate carbamoyltransferase catalytic subunit (311 aa).

2 residues coordinate carbamoyl phosphate: Arg-55 and Thr-56. An L-aspartate-binding site is contributed by Lys-85. Carbamoyl phosphate contacts are provided by Arg-106, His-135, and Gln-138. L-aspartate is bound by residues Arg-168 and Arg-230. Carbamoyl phosphate contacts are provided by Leu-268 and Pro-269.

The protein belongs to the aspartate/ornithine carbamoyltransferase superfamily. ATCase family. As to quaternary structure, heterododecamer (2C3:3R2) of six catalytic PyrB chains organized as two trimers (C3), and six regulatory PyrI chains organized as three dimers (R2).

The enzyme catalyses carbamoyl phosphate + L-aspartate = N-carbamoyl-L-aspartate + phosphate + H(+). The protein operates within pyrimidine metabolism; UMP biosynthesis via de novo pathway; (S)-dihydroorotate from bicarbonate: step 2/3. Catalyzes the condensation of carbamoyl phosphate and aspartate to form carbamoyl aspartate and inorganic phosphate, the committed step in the de novo pyrimidine nucleotide biosynthesis pathway. The chain is Aspartate carbamoyltransferase catalytic subunit from Pectobacterium atrosepticum (strain SCRI 1043 / ATCC BAA-672) (Erwinia carotovora subsp. atroseptica).